We begin with the raw amino-acid sequence, 119 residues long: UPF0231 protein ECA3777 (119 aa).

Belongs to the UPF0231 family.

The sequence is that of UPF0231 protein ECA3777 from Pectobacterium atrosepticum (strain SCRI 1043 / ATCC BAA-672) (Erwinia carotovora subsp. atroseptica).